Consider the following 223-residue polypeptide: Small ribosomal subunit protein uS3 (223 aa).

The KH type-2 domain occupies 38-106 (LKRELKEKLK…EVFIDILEVN (69 aa)).

It belongs to the universal ribosomal protein uS3 family. In terms of assembly, part of the 30S ribosomal subunit. Forms a tight complex with proteins S10 and S14.

Binds the lower part of the 30S subunit head. Binds mRNA in the 70S ribosome, positioning it for translation. The chain is Small ribosomal subunit protein uS3 from Acidobacterium capsulatum (strain ATCC 51196 / DSM 11244 / BCRC 80197 / JCM 7670 / NBRC 15755 / NCIMB 13165 / 161).